Here is a 184-residue protein sequence, read N- to C-terminus: Transcription termination/antitermination protein NusG (184 aa).

Positions 133 to 163 (EGDQVRVVSGPFADFTGTVTEINPERGKVKV) constitute a KOW domain.

The protein belongs to the NusG family.

Participates in transcription elongation, termination and antitermination. This Thermus thermophilus (strain ATCC 27634 / DSM 579 / HB8) protein is Transcription termination/antitermination protein NusG.